Reading from the N-terminus, the 452-residue chain is NAD kinase 2, mitochondrial (452 aa).

The transit peptide at 1–50 (MTCYRGFLLGSCRRVAGGRAALRGSGSGADGRRHLGHGQPRELAGGGSPA) directs the protein to the mitochondrion. The segment at 23–52 (RGSGSGADGRRHLGHGQPRELAGGGSPADG) is disordered. K64 is modified (N6-acetyllysine; alternate). K64 is subject to N6-succinyllysine; alternate. S176 is modified (phosphoserine). The residue at position 312 (K312) is an N6-succinyllysine. K327 carries the N6-acetyllysine; alternate modification. An N6-succinyllysine; alternate modification is found at K327. S377 bears the Phosphoserine mark. K407 is modified (N6-acetyllysine).

The protein belongs to the NAD kinase family. Homodimer.

It is found in the mitochondrion. It catalyses the reaction NAD(+) + ATP = ADP + NADP(+) + H(+). With respect to regulation, inhibited by NADH, NADPH and NADP(+). Mitochondrial NAD(+) kinase that phosphorylates NAD(+) to yield NADP(+). Can use both ATP or inorganic polyphosphate as the phosphoryl donor. This is NAD kinase 2, mitochondrial (Nadk2) from Mus musculus (Mouse).